The chain runs to 234 residues: Zein-alpha 19B1 (234 aa).

A signal peptide spans 1–21; it reads MAAKIFCLLMLLGLSASAATA.

This sequence belongs to the zein family.

Zeins are major seed storage proteins. This chain is Zein-alpha 19B1, found in Zea mays (Maize).